The chain runs to 334 residues: Probable fructose-bisphosphate aldolase class 1 (334 aa).

This sequence belongs to the class I fructose-bisphosphate aldolase family.

It catalyses the reaction beta-D-fructose 1,6-bisphosphate = D-glyceraldehyde 3-phosphate + dihydroxyacetone phosphate. Its pathway is carbohydrate degradation; glycolysis; D-glyceraldehyde 3-phosphate and glycerone phosphate from D-glucose: step 4/4. In Xylella fastidiosa (strain Temecula1 / ATCC 700964), this protein is Probable fructose-bisphosphate aldolase class 1.